The primary structure comprises 733 residues: MEDPLIGRDSLGGGGTDRVRRSEAITHGTPFQKAAALVDLAEDGIGLPVEILDQSSFGESARYYFIFTRLDLIWSLNYFALLFLNFFEQPLWCEKNPKPSCKDRDYYYLGELPYLTNAESIIYEVITLAILLVHTFFPISYEGSRIFWTSRLNLVKVACVVILFVDVLVDFLYLSPLAFDFLPFRIAPYVRVIIFILSIRELRDTLVLLSGMLGTYLNILALWMLFLLFASWIAFVMFEDTQQGLTVFTSYGATLYQMFILFTTSNNPDVWIPAYKSSRWSSVFFVLYVLIGVYFVTNLILAVVYDSFKEQLAKQVSGMDQMKRRMLEKAFGLIDSDKNGEIDKNQCIKLFEQLTNYRTLPKISKEEFGLIFDELDDTRDFKINKDEFADLCQAIALRFQKEEVPSLFEHFPQIYHSALSQQLRAFVRSPNFGYAISFILIINFIAVVVETTLDIEESSAQKPWQVAEFVFGWIYVLEMALKIYTYGFENYWREGANRFDFLVTWVIVIGETATFITPDENTFFSNGEWIRYLLLARMLRLIRLLMNVQRYRAFIATFITLIPSLMPYLGTIFCVLCIYCSIGVQVFGGLVNAGNKKLFETELAEDDYLLFNFNDYPNGMVTLFNLLVMGNWQVWMESYKDLTGTWWSITYFVSFYVITILLLLNLVVAFVLEAFFTELDLEEEEKCQGQDSQEKRNRRRSAGSKSRSQRVDTLLHHMLGDELSKPECSTSDT.

N-acetylmethionine is present on Met-1. Over 1-71 the chain is Cytoplasmic; that stretch reads MEDPLIGRDS…RYYFIFTRLD (71 aa). A helical membrane pass occupies residues 72-92; that stretch reads LIWSLNYFALLFLNFFEQPLW. Topologically, residues 93–120 are vacuolar; it reads CEKNPKPSCKDRDYYYLGELPYLTNAES. The helical transmembrane segment at 121–141 threads the bilayer; the sequence is IIYEVITLAILLVHTFFPISY. Over 142 to 158 the chain is Cytoplasmic; the sequence is EGSRIFWTSRLNLVKVA. Residues 159–179 traverse the membrane as a helical segment; that stretch reads CVVILFVDVLVDFLYLSPLAF. A topological domain (vacuolar) is located at residue Asp-180. A helical; Voltage-sensor membrane pass occupies residues 181–199; the sequence is FLPFRIAPYVRVIIFILSI. The Cytoplasmic segment spans residues 200–218; sequence RELRDTLVLLSGMLGTYLN. A helical transmembrane segment spans residues 219–239; that stretch reads ILALWMLFLLFASWIAFVMFE. The Vacuolar segment spans residues 240 to 245; that stretch reads DTQQGL. Positions 246-260 form an intramembrane region, pore-forming; that stretch reads TVFTSYGATLYQMFI. Over 261–282 the chain is Vacuolar; the sequence is LFTTSNNPDVWIPAYKSSRWSS. Residues 283-303 traverse the membrane as a helical segment; it reads VFFVLYVLIGVYFVTNLILAV. Residues 304–428 lie on the Cytoplasmic side of the membrane; sequence VYDSFKEQLA…LSQQLRAFVR (125 aa). EF-hand domains follow at residues 322–357 and 363–398; these read MKRRMLEKAFGLIDSDKNGEIDKNQCIKLFEQLTNY and ISKEEFGLIFDELDDTRDFKINKDEFADLCQAIALR. The chain crosses the membrane as a helical span at residues 429–449; sequence SPNFGYAISFILIINFIAVVV. Over 450 to 465 the chain is Vacuolar; the sequence is ETTLDIEESSAQKPWQ. The chain crosses the membrane as a helical span at residues 466–486; it reads VAEFVFGWIYVLEMALKIYTY. Residues 487-498 lie on the Cytoplasmic side of the membrane; the sequence is GFENYWREGANR. The helical transmembrane segment at 499-519 threads the bilayer; it reads FDFLVTWVIVIGETATFITPD. Residues 520 to 528 lie on the Vacuolar side of the membrane; sequence ENTFFSNGE. A helical; Voltage-sensor membrane pass occupies residues 529–546; that stretch reads WIRYLLLARMLRLIRLLM. The Cytoplasmic portion of the chain corresponds to 547–557; that stretch reads NVQRYRAFIAT. The chain crosses the membrane as a helical span at residues 558-578; the sequence is FITLIPSLMPYLGTIFCVLCI. Residues 579-615 lie on the Vacuolar side of the membrane; the sequence is YCSIGVQVFGGLVNAGNKKLFETELAEDDYLLFNFND. An intramembrane region (pore-forming) is located at residues 616–630; sequence YPNGMVTLFNLLVMG. The Vacuolar portion of the chain corresponds to 631–651; the sequence is NWQVWMESYKDLTGTWWSITY. Residues 652–672 form a helical membrane-spanning segment; sequence FVSFYVITILLLLNLVVAFVL. Over 673–733 the chain is Cytoplasmic; sequence EAFFTELDLE…SKPECSTSDT (61 aa). A compositionally biased stretch (basic and acidic residues) spans 686-695; it reads KCQGQDSQEK. A disordered region spans residues 686–711; the sequence is KCQGQDSQEKRNRRRSAGSKSRSQRV.

Belongs to the calcium channel alpha-1 subunit (TC 1.A.1.11) family. Two pore calcium channel subfamily. As to quaternary structure, homodimer. As to expression, ubiquitously expressed.

It is found in the vacuole membrane. Inhibited by Al(3+). Its function is as follows. Functions as a voltage-gated inward-rectifying Ca(2+) channel (VDCC) across the vacuole membrane. Is one of the essential components of the slow vacuolar (SV) channel. Acts as the major ROS-responsive Ca(2+) channel and is the possible target of Al-dependent inhibition. Involved in the regulation of germination and stomatal movement. The protein is Two pore calcium channel protein 1 (TPC1) of Arabidopsis thaliana (Mouse-ear cress).